The sequence spans 851 residues: Putative cell signaling protein (851 aa).

Basic and acidic residues-rich tracts occupy residues 165-176 (KLNEQDGKKSDN), 196-223 (DQAR…EETK), and 767-781 (SEER…LSHD). Disordered regions lie at residues 165 to 223 (KLNE…EETK) and 714 to 781 (DDSE…LSHD).

In terms of processing, palmitoylated.

The polypeptide is Putative cell signaling protein (Schizosaccharomyces pombe (strain 972 / ATCC 24843) (Fission yeast)).